We begin with the raw amino-acid sequence, 512 residues long: Amidase 2 (512 aa).

Catalysis depends on charge relay system residues Lys122 and Ser197. Residues Ser197 and 218–221 (IGGS) each bind substrate. Residue Ser221 is the Acyl-ester intermediate of the active site.

It belongs to the amidase family.

The enzyme catalyses a monocarboxylic acid amide + H2O = a monocarboxylate + NH4(+). Its pathway is xenobiotic degradation. Amidase; part of the Fusarium detoxification of benzoxazolinone cluster 2 (FDB2) involved in the degradation of benzoxazolinones produced by the host plant. Maize, wheat, and rye produce the 2 benzoxazinone phytoanticipins 2,4-dihy-droxy-7-methoxy-1,4-benzoxazin-3-one (DIMBOA) and 2,4-dihydroxy-1,4-benzoxazin-3-one (DIBOA) that, due to their inherent instability once released, spontaneously degrade to the more stable corresponding benzoxazolinones, 6-methoxy-2-benzoxazolinone (MBOA) and 2-benzoxazolinone (BOA), respectively. The first step in the detoxification of benzoxazolinones involves the hydrolysis of the cyclic ester bond of benzoxazolinones by the FDB1 cluster gamma-lactamase MBL1 to aminophenols. MBL1 is able to convert BOA into 2-aminophenol (2-AP), as well as MBOA into 5-methoxy-2-aminophenol (2-AMP). The FDB2 cluster N-malonyltransferase FDB2/NAT1 then metabolizes aminophenols via N-malonylation to non-toxic malonamic acids. FDB2/NAT1 converts 2-AP into N-(2-hydroxyphenyl) malonamic acid (HPMA) and 2-AMP into N-(2-hydroxy-4-methoxyphenyl) malonamic acid (HMPMA). The duplicated dienlactone hydrolases DLH1 and DLH2 may provide redundant function for hydrolyzing the lactone moiety in the BOA molecule. The roles of the amidases an other enzymes encoded by the 2 FDB clusters have not been identified so far. This chain is Amidase 2, found in Gibberella moniliformis (strain M3125 / FGSC 7600) (Maize ear and stalk rot fungus).